We begin with the raw amino-acid sequence, 200 residues long: GTP cyclohydrolase-2 (200 aa).

50–54 contributes to the GTP binding site; sequence RVHSE. 3 residues coordinate Zn(2+): Cys-55, Cys-66, and Cys-68. Residues Gln-71, 93 to 95, and Thr-115 each bind GTP; that span reads EGR. The Proton acceptor role is filled by Asp-127. Arg-129 serves as the catalytic Nucleophile. 2 residues coordinate GTP: Thr-150 and Lys-155.

Belongs to the GTP cyclohydrolase II family. The cofactor is Zn(2+).

The catalysed reaction is GTP + 4 H2O = 2,5-diamino-6-hydroxy-4-(5-phosphoribosylamino)-pyrimidine + formate + 2 phosphate + 3 H(+). Its pathway is cofactor biosynthesis; riboflavin biosynthesis; 5-amino-6-(D-ribitylamino)uracil from GTP: step 1/4. Its function is as follows. Catalyzes the conversion of GTP to 2,5-diamino-6-ribosylamino-4(3H)-pyrimidinone 5'-phosphate (DARP), formate and pyrophosphate. In Acinetobacter baumannii (strain AB307-0294), this protein is GTP cyclohydrolase-2.